Consider the following 148-residue polypeptide: Deoxyuridine 5'-triphosphate nucleotidohydrolase (148 aa).

Substrate-binding positions include R68–G70, N81, T85–D87, and K95.

This sequence belongs to the dUTPase family. Mg(2+) is required as a cofactor.

It carries out the reaction dUTP + H2O = dUMP + diphosphate + H(+). Its pathway is pyrimidine metabolism; dUMP biosynthesis; dUMP from dCTP (dUTP route): step 2/2. Its function is as follows. This enzyme is involved in nucleotide metabolism: it produces dUMP, the immediate precursor of thymidine nucleotides and it decreases the intracellular concentration of dUTP so that uracil cannot be incorporated into DNA. This chain is Deoxyuridine 5'-triphosphate nucleotidohydrolase, found in Rickettsia typhi (strain ATCC VR-144 / Wilmington).